The primary structure comprises 445 residues: Phosphoglucosamine mutase (445 aa).

Ser-102 serves as the catalytic Phosphoserine intermediate. The Mg(2+) site is built by Ser-102, Asp-241, Asp-243, and Asp-245. Position 102 is a phosphoserine (Ser-102).

This sequence belongs to the phosphohexose mutase family. The cofactor is Mg(2+). Activated by phosphorylation.

The enzyme catalyses alpha-D-glucosamine 1-phosphate = D-glucosamine 6-phosphate. In terms of biological role, catalyzes the conversion of glucosamine-6-phosphate to glucosamine-1-phosphate. The polypeptide is Phosphoglucosamine mutase (Edwardsiella ictaluri (strain 93-146)).